The chain runs to 413 residues: Aspartate aminotransferase, cytoplasmic (413 aa).

3 residues coordinate L-aspartate: Gly-39, Trp-141, and Asn-195. N6-(pyridoxal phosphate)lysine is present on Lys-259. Arg-387 is a binding site for L-aspartate.

Belongs to the class-I pyridoxal-phosphate-dependent aminotransferase family. As to quaternary structure, homodimer. It depends on pyridoxal 5'-phosphate as a cofactor.

The protein localises to the cytoplasm. It carries out the reaction L-aspartate + 2-oxoglutarate = oxaloacetate + L-glutamate. It catalyses the reaction L-cysteine + 2-oxoglutarate = 2-oxo-3-sulfanylpropanoate + L-glutamate. The catalysed reaction is (2S)-2-aminobutanoate + 2-oxoglutarate = 2-oxobutanoate + L-glutamate. The enzyme catalyses 3-sulfino-L-alanine + 2-oxoglutarate = 3-sulfinopyruvate + L-glutamate. Biosynthesis of L-glutamate from L-aspartate or L-cysteine. Important regulator of levels of glutamate, the major excitatory neurotransmitter of the vertebrate central nervous system. Acts as a scavenger of glutamate in brain neuroprotection. The aspartate aminotransferase activity is involved in hepatic glucose synthesis during development and in adipocyte glyceroneogenesis. Using L-cysteine as substrate, regulates levels of mercaptopyruvate, an important source of hydrogen sulfide. Mercaptopyruvate is converted into H(2)S via the action of 3-mercaptopyruvate sulfurtransferase (3MST). Hydrogen sulfide is an important synaptic modulator and neuroprotectant in the brain. This Sus scrofa (Pig) protein is Aspartate aminotransferase, cytoplasmic.